The sequence spans 234 residues: ATP-dependent dethiobiotin synthetase BioD (234 aa).

Asp-12–Phe-17 contributes to the ATP binding site. Thr-16 contacts Mg(2+). Residue Lys-37 is part of the active site. Ser-41 is a substrate binding site. ATP is bound by residues Asp-52, Glu-118–Gly-121, and Ser-178–Gln-179. Residues Asp-52 and Glu-118 each contribute to the Mg(2+) site.

The protein belongs to the dethiobiotin synthetase family. As to quaternary structure, homodimer. Requires Mg(2+) as cofactor.

It localises to the cytoplasm. It catalyses the reaction (7R,8S)-7,8-diammoniononanoate + CO2 + ATP = (4R,5S)-dethiobiotin + ADP + phosphate + 3 H(+). It participates in cofactor biosynthesis; biotin biosynthesis; biotin from 7,8-diaminononanoate: step 1/2. Functionally, catalyzes a mechanistically unusual reaction, the ATP-dependent insertion of CO2 between the N7 and N8 nitrogen atoms of 7,8-diaminopelargonic acid (DAPA, also called 7,8-diammoniononanoate) to form a ureido ring. This Phenylobacterium zucineum (strain HLK1) protein is ATP-dependent dethiobiotin synthetase BioD.